The chain runs to 405 residues: L-rhamnonate dehydratase (405 aa).

Residues histidine 33 and arginine 59 each coordinate substrate. Mg(2+) contacts are provided by aspartate 226, glutamate 252, and glutamate 280. Histidine 329 acts as the Proton acceptor in catalysis. Residue glutamate 349 participates in substrate binding.

This sequence belongs to the mandelate racemase/muconate lactonizing enzyme family. RhamD subfamily. As to quaternary structure, homooctamer; tetramer of dimers. Requires Mg(2+) as cofactor.

It carries out the reaction L-rhamnonate = 2-dehydro-3-deoxy-L-rhamnonate + H2O. Its function is as follows. Catalyzes the dehydration of L-rhamnonate to 2-keto-3-deoxy-L-rhamnonate (KDR). The sequence is that of L-rhamnonate dehydratase from Escherichia coli O6:K15:H31 (strain 536 / UPEC).